Here is a 437-residue protein sequence, read N- to C-terminus: Chromosomal replication initiator protein DnaA (437 aa).

Residues M1–I69 form a domain I, interacts with DnaA modulators region. Residues I69–T100 are domain II. The segment at I101–A315 is domain III, AAA+ region. ATP is bound by residues G145, G147, K148, and T149. The segment at N316–N437 is domain IV, binds dsDNA.

This sequence belongs to the DnaA family. Oligomerizes as a right-handed, spiral filament on DNA at oriC.

Its subcellular location is the cytoplasm. In terms of biological role, plays an essential role in the initiation and regulation of chromosomal replication. ATP-DnaA binds to the origin of replication (oriC) to initiate formation of the DNA replication initiation complex once per cell cycle. Binds the DnaA box (a 9 base pair repeat at the origin) and separates the double-stranded (ds)DNA. Forms a right-handed helical filament on oriC DNA; dsDNA binds to the exterior of the filament while single-stranded (ss)DNA is stabiized in the filament's interior. The ATP-DnaA-oriC complex binds and stabilizes one strand of the AT-rich DNA unwinding element (DUE), permitting loading of DNA polymerase. After initiation quickly degrades to an ADP-DnaA complex that is not apt for DNA replication. Binds acidic phospholipids. The sequence is that of Chromosomal replication initiator protein DnaA from Wolinella succinogenes (strain ATCC 29543 / DSM 1740 / CCUG 13145 / JCM 31913 / LMG 7466 / NCTC 11488 / FDC 602W) (Vibrio succinogenes).